The sequence spans 638 residues: Nitrous-oxide reductase (638 aa).

The tat-type signal signal peptide spans 1-52 (MSDKDSKNTPQVPEKLGLSRRGFLGASAVTGAAVAATALGGAVMTRESWAQA). H129, H130, and H178 together coordinate Cu cation. Residues Y256, E259, M267, D273, and N324 each contribute to the Ca(2+) site. H326, H382, and H433 together coordinate Cu cation. Positions 454 and 469 each coordinate Ca(2+). Residues H494, H583, C618, W620, C622, H626, and M629 each coordinate Cu cation. The tract at residues 542–638 (NKVRVYMTSM…MVGRMMVEPA (97 aa)) is COX2-like.

The protein belongs to the NosZ family. In the C-terminal section; belongs to the cytochrome c oxidase subunit 2 family. In terms of assembly, homodimer. Ca(2+) serves as cofactor. The cofactor is Cu cation. Post-translationally, predicted to be exported by the Tat system. The position of the signal peptide cleavage has not been experimentally proven. The N-terminus is blocked.

It localises to the periplasm. The catalysed reaction is N2 + 2 Fe(III)-[cytochrome c] + H2O = nitrous oxide + 2 Fe(II)-[cytochrome c] + 2 H(+). Its pathway is nitrogen metabolism; nitrate reduction (denitrification); dinitrogen from nitrate: step 4/4. Nitrous-oxide reductase is part of a bacterial respiratory system which is activated under anaerobic conditions in the presence of nitrate or nitrous oxide. This is Nitrous-oxide reductase (nosZ) from Stutzerimonas stutzeri (Pseudomonas stutzeri).